The sequence spans 346 residues: B3 domain-containing protein At5g60142 (346 aa).

Positions Pro13 to Ala109 form a DNA-binding region, TF-B3. Disordered regions lie at residues Gln158–Asp179 and Thr192–Gln243. Positions Thr192–Ala217 are enriched in acidic residues. Residues Asp218 to Thr229 are compositionally biased toward basic and acidic residues.

The protein resides in the nucleus. The protein is B3 domain-containing protein At5g60142 of Arabidopsis thaliana (Mouse-ear cress).